A 312-amino-acid polypeptide reads, in one-letter code: Taste receptor type 2 member 62 (312 aa).

Over 1 to 4 (MPSL) the chain is Extracellular. Residues 5-27 (PTLIFIAIFCLESLAAMLQNGFL) traverse the membrane as a helical segment. Topologically, residues 28-39 (VTMLGREWVRCR) are cytoplasmic. The chain crosses the membrane as a helical span at residues 40–62 (MLSTSDMIVACLAASRFCLHGVA). Residues 63–81 (MANNLLASLDFSRAVPYMN) are Extracellular-facing. Residues 82–104 (IFWDLFNALTLWFTALLAAFYCV) form a helical membrane-spanning segment. The Cytoplasmic segment spans residues 105 to 127 (KISSFSHPTFAWLKWRISRLVPK). A helical membrane pass occupies residues 128 to 150 (LIKGSLIICGLEVISSATGNILF). Topologically, residues 151–182 (GQRKVSLSSYRNETLVYRVQASFQLYFFLYDG) are extracellular. A glycan (N-linked (GlcNAc...) asparagine) is linked at N162. Residues 183–205 (FVWSIPFLLFLVSTVLLIVSLCW) traverse the membrane as a helical segment. The Cytoplasmic segment spans residues 206–231 (QLGQMRDLRPGPCDPSTQAYTMALKS). A helical membrane pass occupies residues 232-254 (LTFSLIFCTLYFLSLFASALKII). Over 255 to 258 (NFQN) the chain is Extracellular. The helical transmembrane segment at 259 to 281 (HWHWAWEVLIYANICLHSTVLVL) threads the bilayer. Topologically, residues 282 to 312 (RSPKLKKGLKTWPQLQCPCDAGSQGFGRCWP) are cytoplasmic.

This sequence belongs to the G-protein coupled receptor T2R family.

The protein localises to the membrane. Functionally, receptor that may play a role in the perception of bitterness and is gustducin-linked. May play a role in sensing the chemical composition of the gastrointestinal content. The activity of this receptor may stimulate alpha gustducin, mediate PLC-beta-2 activation and lead to the gating of TRPM5. This Pan paniscus (Pygmy chimpanzee) protein is Taste receptor type 2 member 62 (TAS2R62).